A 106-amino-acid polypeptide reads, in one-letter code: SH3 domain-binding glutamic acid-rich-like protein 2-B (106 aa).

An SH3-binding motif is present at residues 61–67 (QGNPLPP).

It belongs to the SH3BGR family.

The protein localises to the nucleus. In Xenopus laevis (African clawed frog), this protein is SH3 domain-binding glutamic acid-rich-like protein 2-B (sh3bgrl2-b).